The sequence spans 317 residues: Tyrosine--tRNA ligase (317 aa).

Tyr-33 lines the L-tyrosine pocket. The 'HIGH' region signature appears at 38–46; the sequence is PSGKIHMGH. 4 residues coordinate L-tyrosine: Tyr-155, Gln-159, Asp-162, and Gln-177. A 'KMSKS' region motif is present at residues 211-215; it reads KMASS. Position 214 (Ser-214) interacts with ATP.

The protein belongs to the class-I aminoacyl-tRNA synthetase family. TyrS type 3 subfamily. In terms of assembly, homodimer.

The protein localises to the cytoplasm. The catalysed reaction is tRNA(Tyr) + L-tyrosine + ATP = L-tyrosyl-tRNA(Tyr) + AMP + diphosphate + H(+). Its function is as follows. Catalyzes the attachment of tyrosine to tRNA(Tyr) in a two-step reaction: tyrosine is first activated by ATP to form Tyr-AMP and then transferred to the acceptor end of tRNA(Tyr). This is Tyrosine--tRNA ligase from Methanosarcina mazei (strain ATCC BAA-159 / DSM 3647 / Goe1 / Go1 / JCM 11833 / OCM 88) (Methanosarcina frisia).